The sequence spans 210 residues: Large ribosomal subunit protein uL3 (210 aa).

It belongs to the universal ribosomal protein uL3 family. As to quaternary structure, part of the 50S ribosomal subunit. Forms a cluster with proteins L14 and L19.

Its function is as follows. One of the primary rRNA binding proteins, it binds directly near the 3'-end of the 23S rRNA, where it nucleates assembly of the 50S subunit. The protein is Large ribosomal subunit protein uL3 of Lawsonia intracellularis (strain PHE/MN1-00).